The primary structure comprises 231 residues: 5'-methylthioadenosine/S-adenosylhomocysteine nucleosidase (231 aa).

Glu12 (proton acceptor) is an active-site residue. Substrate is bound by residues Gly78, Met153, and Met174 to Glu175. Asp198 serves as the catalytic Proton donor.

This sequence belongs to the PNP/UDP phosphorylase family. MtnN subfamily.

The catalysed reaction is S-adenosyl-L-homocysteine + H2O = S-(5-deoxy-D-ribos-5-yl)-L-homocysteine + adenine. It carries out the reaction S-methyl-5'-thioadenosine + H2O = 5-(methylsulfanyl)-D-ribose + adenine. The enzyme catalyses 5'-deoxyadenosine + H2O = 5-deoxy-D-ribose + adenine. The protein operates within amino-acid biosynthesis; L-methionine biosynthesis via salvage pathway; S-methyl-5-thio-alpha-D-ribose 1-phosphate from S-methyl-5'-thioadenosine (hydrolase route): step 1/2. In terms of biological role, catalyzes the irreversible cleavage of the glycosidic bond in both 5'-methylthioadenosine (MTA) and S-adenosylhomocysteine (SAH/AdoHcy) to adenine and the corresponding thioribose, 5'-methylthioribose and S-ribosylhomocysteine, respectively. Also cleaves 5'-deoxyadenosine, a toxic by-product of radical S-adenosylmethionine (SAM) enzymes, into 5-deoxyribose and adenine. In Bacillus thuringiensis subsp. konkukian (strain 97-27), this protein is 5'-methylthioadenosine/S-adenosylhomocysteine nucleosidase.